Here is a 354-residue protein sequence, read N- to C-terminus: Chorismate synthase (354 aa).

Arg48 and Arg54 together coordinate NADP(+). Residues 125–127 (RSS), 238–239 (NA), Gly278, 293–297 (KPTSS), and Arg319 contribute to the FMN site.

It belongs to the chorismate synthase family. Homotetramer. Requires FMNH2 as cofactor.

The enzyme catalyses 5-O-(1-carboxyvinyl)-3-phosphoshikimate = chorismate + phosphate. Its pathway is metabolic intermediate biosynthesis; chorismate biosynthesis; chorismate from D-erythrose 4-phosphate and phosphoenolpyruvate: step 7/7. Functionally, catalyzes the anti-1,4-elimination of the C-3 phosphate and the C-6 proR hydrogen from 5-enolpyruvylshikimate-3-phosphate (EPSP) to yield chorismate, which is the branch point compound that serves as the starting substrate for the three terminal pathways of aromatic amino acid biosynthesis. This reaction introduces a second double bond into the aromatic ring system. The chain is Chorismate synthase from Blochmanniella pennsylvanica (strain BPEN).